We begin with the raw amino-acid sequence, 525 residues long: Asparagine synthetase domain-containing protein YML096W (525 aa).

The active-site For GATase activity is Cys-2. Residues 2-209 (CGILLHYCPN…LNSNQRSHLP (208 aa)) form the Glutamine amidotransferase type-2 domain. The Asparagine synthetase domain maps to 210–523 (YEVTSEIDLN…GTDLLKENRN (314 aa)). The disordered stretch occupies residues 503 to 525 (SAKMTKDGNKHGTDLLKENRNCS). Basic and acidic residues predominate over residues 506–525 (MTKDGNKHGTDLLKENRNCS).

It localises to the cytoplasm. The protein is Asparagine synthetase domain-containing protein YML096W of Saccharomyces cerevisiae (strain ATCC 204508 / S288c) (Baker's yeast).